The primary structure comprises 268 residues: Tryptophan synthase alpha chain (268 aa).

Residues Glu-49 and Asp-60 each act as proton acceptor in the active site.

Belongs to the TrpA family. Tetramer of two alpha and two beta chains.

The enzyme catalyses (1S,2R)-1-C-(indol-3-yl)glycerol 3-phosphate + L-serine = D-glyceraldehyde 3-phosphate + L-tryptophan + H2O. It functions in the pathway amino-acid biosynthesis; L-tryptophan biosynthesis; L-tryptophan from chorismate: step 5/5. The alpha subunit is responsible for the aldol cleavage of indoleglycerol phosphate to indole and glyceraldehyde 3-phosphate. The sequence is that of Tryptophan synthase alpha chain from Pseudomonas paraeruginosa (strain DSM 24068 / PA7) (Pseudomonas aeruginosa (strain PA7)).